The sequence spans 171 residues: Adenine phosphoribosyltransferase (171 aa).

Belongs to the purine/pyrimidine phosphoribosyltransferase family. Homodimer.

The protein resides in the cytoplasm. The catalysed reaction is AMP + diphosphate = 5-phospho-alpha-D-ribose 1-diphosphate + adenine. It participates in purine metabolism; AMP biosynthesis via salvage pathway; AMP from adenine: step 1/1. In terms of biological role, catalyzes a salvage reaction resulting in the formation of AMP, that is energically less costly than de novo synthesis. The sequence is that of Adenine phosphoribosyltransferase from Geotalea daltonii (strain DSM 22248 / JCM 15807 / FRC-32) (Geobacter daltonii).